The following is a 1445-amino-acid chain: 3'-5' RNA helicase YTHDC2 (1445 aa).

The tract at residues 1–50 (MSRPSSVSPRPPAPSGGGTGGGGGGSGGGGGGGGGGPASCGPGGGGRAKG) is disordered. Positions 15–48 (SGGGTGGGGGGSGGGGGGGGGGPASCGPGGGGRA) are enriched in gly residues. Residues 53-121 (DIRIDEEVKI…NRYLTVKKKD (69 aa)) enclose the R3H domain. One can recognise a Helicase ATP-binding domain in the interval 218-384 (VKIIKENKVV…FGSCPVIYIQ (167 aa)). 231–238 (GETGSGKT) is an ATP binding site. Residues 331–334 (DEVH) carry the DEAH box motif. ANK repeat units lie at residues 521 to 553 (TSAT…SKAS) and 554 to 586 (NGWM…FGNL). The 173-residue stretch at 627-799 (LLYNICHSCD…ELCLHTKLLA (173 aa)) folds into the Helicase C-terminal domain. Phosphoserine occurs at positions 1104, 1105, and 1107. Residues 1179-1189 (EQSAGLQQPSG) show a composition bias toward polar residues. The interval 1179–1303 (EQSAGLQQPS…SPSPRPNMPI (125 aa)) is disordered. Basic and acidic residues predominate over residues 1246–1264 (KYKDRGILHPKRSTDDRSD). Positions 1265-1279 (QSSVKSTDSSSYPSP) are enriched in low complexity. 3 positions are modified to phosphoserine: serine 1278, serine 1282, and serine 1296. The YTH domain maps to 1303–1433 (IRYFIMKSSN…QVGEQLLQLW (131 aa)). RNA contacts are provided by residues 1309 to 1311 (KSS), tryptophan 1325, and tryptophan 1375.

Belongs to the DEAD box helicase family. DEAH subfamily. In terms of assembly, interacts with MEIOC; binds transcripts that regulate the mitotic cell cycle inhibiting progression into metaphase, thereby allowing meiotic prophase to proceed normally. Interacts (via ANK repeats) with XRN1. Interacts with ZCCHC4. Associates with the small ribosomal subunit. Interacts with RBM46. Present in male and female germ cells (at protein level). Highly expressed in testis. Not detected in spermatogonia next to the tubule wall but is strongly expressed in spermatocytes, suggesting that it is up-regulated in germ cells upon entry into meiosis (at protein level).

It is found in the cytoplasm. It localises to the perinuclear region. It catalyses the reaction ATP + H2O = ADP + phosphate + H(+). Its function is as follows. 3'-5' RNA helicase that plays a key role in the male and female germline by promoting transition from mitotic to meiotic divisions in stem cells. Specifically recognizes and binds N6-methyladenosine (m6A)-containing RNAs, a modification present at internal sites of mRNAs and some non-coding RNAs that plays a role in the efficiency of RNA processing and stability. Essential for ensuring a successful progression of the meiotic program in the germline by regulating the level of m6A-containing RNAs. Acts by binding and promoting degradation of m6A-containing mRNAs: the 3'-5' RNA helicase activity is required for this process and RNA degradation may be mediated by XRN1 exoribonuclease. Required for both spermatogenesis and oogenesis. This is 3'-5' RNA helicase YTHDC2 from Mus musculus (Mouse).